The chain runs to 230 residues: Modulator of macroautophagy TMEM150B-A (230 aa).

Met-1 is a topological domain (cytoplasmic). Residues 2–22 (WAWALLPICLTIWATAGIWIV) traverse the membrane as a helical segment. Residues 23-50 (YGMSVSNGSVNLSDGFPYISLCGTDPPQ) are Extracellular-facing. 2 N-linked (GlcNAc...) asparagine glycosylation sites follow: Asn-29 and Asn-33. A helical transmembrane segment spans residues 51-71 (SCVFGQVLNVGAMLGVWISAI). The Cytoplasmic segment spans residues 72–83 (RFQQIRDYNCHS). The chain crosses the membrane as a helical span at residues 84 to 104 (VLNSVSLAMGILCALGTSIVG). At 105–115 (NFQQSNQLETH) the chain is on the extracellular side. A helical transmembrane segment spans residues 116-136 (LAGAFLAFVIGNIYFWMQTAL). Residues 137–150 (TYMVKPTHGGCYIG) lie on the Cytoplasmic side of the membrane. A helical membrane pass occupies residues 151–171 (PIRFCLSVACTALIVLMAVFL). At 172–183 (KMNMKSISAICE) the chain is on the extracellular side. The helical transmembrane segment at 184-204 (WIVAMILFLLYGLFAVDFWHL) threads the bilayer. The Cytoplasmic portion of the chain corresponds to 205 to 230 (DGHYFHVKKRTVIPNEMQVSTVTLSI).

The protein belongs to the DRAM/TMEM150 family.

The protein localises to the cell membrane. It localises to the endosome membrane. It is found in the cytoplasmic vesicle. The protein resides in the autophagosome membrane. Modulator of macroautophagy that causes accumulation of autophagosomes under basal conditions and enhances autophagic flux. Represses cell death and promotes long-term clonogenic survival of cells grown in the absence of glucose in a macroautophagy-independent manner. May have some role in extracellular matrix engulfment or growth factor receptor recycling, both of which can modulate cell survival. The sequence is that of Modulator of macroautophagy TMEM150B-A from Xenopus laevis (African clawed frog).